The following is a 390-amino-acid chain: Ribonucleoside-diphosphate reductase subunit M2 (390 aa).

Phosphoserine is present on Ser20. Thr33 is modified (phosphothreonine). The Cy signature appears at 49–51; sequence RRI. Positions 139, 170, and 173 each coordinate Fe cation. Tyr177 is a catalytic residue. Residues Glu233, Glu267, and His270 each contribute to the Fe cation site.

This sequence belongs to the ribonucleoside diphosphate reductase small chain family. Heterodimer of a large and a small subunit. Interacts (via Cy motif and when phosphorylated at Thr-33) with CCNF; the interaction occurs exclusively in G2 and early M. Requires Fe cation as cofactor. In terms of processing, phosphorylation on Ser-20 relieves the inhibitory effect on Wnt signaling. Phosphorylated on Thr-33 by CDK1 and CDK2; predominantly in G2 and M phase. Post-translationally, ubiquitinated by the SCF(CCNF) E3 ubiquitin-protein ligase complex; leading to its degradation by the proteasome.

It is found in the cytoplasm. The protein localises to the nucleus. The enzyme catalyses a 2'-deoxyribonucleoside 5'-diphosphate + [thioredoxin]-disulfide + H2O = a ribonucleoside 5'-diphosphate + [thioredoxin]-dithiol. In terms of biological role, provides the precursors necessary for DNA synthesis. Catalyzes the biosynthesis of deoxyribonucleotides from the corresponding ribonucleotides. Inhibits Wnt signaling. This chain is Ribonucleoside-diphosphate reductase subunit M2 (Rrm2), found in Rattus norvegicus (Rat).